The primary structure comprises 1125 residues: Telomerase reverse transcriptase (1125 aa).

Residues methionine 1–glycine 234 are RNA-interacting domain 1. The segment at valine 58–phenylalanine 199 is GQ motif. Residues tryptophan 137–leucine 141 form a required for regulating specificity for telomeric DNA and for processivity for primer elongation region. A disordered region spans residues arginine 186–proline 308. Positions glycine 224–arginine 243 are enriched in basic residues. Residues arginine 226–arginine 244 carry the Bipartite nuclear localization signal motif. Serine 231 is modified (phosphoserine; by PKB/AKT1). The segment at arginine 235–alanine 312 is linker. Composition is skewed to basic and acidic residues over residues arginine 244–glutamate 253 and aspartate 269–aspartate 279. The tract at residues glycine 290–glutamate 531 is required for oligomerization. The tract at residues cysteine 313–glycine 543 is RNA-interacting domain 2. The TFLY; involved in RNA binding motif lies at threonine 316–tyrosine 321. Residues proline 364–arginine 514 are QFP motif. The interval leucine 385–alanine 405 is CP motif. Serine 450 bears the Phosphoserine; by DYRK2 mark. The region spanning glutamate 598–leucine 928 is the Reverse transcriptase domain. Tyrosine 700 is subject to Phosphotyrosine; by SRC-type Tyr-kinases. Mg(2+) contacts are provided by aspartate 705, aspartate 861, and aspartate 862. Positions leucine 907–phenylalanine 921 are required for oligomerization. A primer grip sequence region spans residues tryptophan 923–leucine 927. The CTE stretch occupies residues aspartate 929 to aspartate 1125.

Belongs to the reverse transcriptase family. Telomerase subfamily. In terms of assembly, catalytic component of the telomerase holoenzyme complex composed of one molecule of TERT, one molecule of WRAP53/TCAB1, two molecules of H/ACA ribonucleoprotein complex subunits DKC1, NOP10, NHP2 and GAR1, and a telomerase RNA template component (TERC). The telomerase holoenzyme complex is associated with TEP1, SMG6/EST1A and POT1. The molecular chaperone HSP90/P23 complex is required for correct assembly and stabilization of the active telomerase. Interacts directly with HSP90A and PTGES3. Interacts with HSPA1A; the interaction occurs in the absence of TERC and dissociates once the complex has formed. Interacts with RAN; the interaction promotes nuclear export of TERT. Interacts with XPO1. Interacts with PTPN11; the interaction retains TERT in the nucleus. Interacts with NCL (via RRM1 and C-terminal RRM4/Arg/Gly-rich domains); the interaction is important for nucleolar localization of TERT. Interacts with SMARCA4 (via the bromodomain); the interaction regulates Wnt-mediated signaling. Interacts with MCRS1 (isoform MCRS2); the interaction inhibits in vitro telomerase activity. Interacts with PIF1; the interaction has no effect on the elongation activity of TERT. Interacts with PML; the interaction recruits TERT to PML bodies and inhibits telomerase activity. Interacts with GNL3L. Interacts with isoform 1 and isoform 2 of NVL. Interacts with DHX36. Interacts with ATF7. Phosphorylation at Tyr-700 under oxidative stress leads to translocation of TERT to the cytoplasm and reduces its antiapoptotic activity. Dephosphorylated by SHP2/PTPN11 leading to nuclear retention. Phosphorylation at Ser-231 by the AKT pathway promotes nuclear location. Phosphorylation at the G2/M phase at Ser-450 by DYRK2 promotes ubiquitination by the EDVP complex and degradation. Post-translationally, ubiquitinated by the EDVP complex, a E3 ligase complex following phosphorylation at Ser-450 by DYRK2. Ubiquitinated leads to proteasomal degradation.

It localises to the nucleus. The protein resides in the nucleolus. It is found in the nucleoplasm. The protein localises to the chromosome. Its subcellular location is the telomere. It localises to the cytoplasm. The protein resides in the PML body. The catalysed reaction is DNA(n) + a 2'-deoxyribonucleoside 5'-triphosphate = DNA(n+1) + diphosphate. In terms of biological role, telomerase is a ribonucleoprotein enzyme essential for the replication of chromosome termini in most eukaryotes. Active in progenitor and cancer cells. Inactive, or very low activity, in normal somatic cells. Catalytic component of the teleromerase holoenzyme complex whose main activity is the elongation of telomeres by acting as a reverse transcriptase that adds simple sequence repeats to chromosome ends by copying a template sequence within the RNA component of the enzyme. Catalyzes the RNA-dependent extension of 3'-chromosomal termini with the 6-nucleotide telomeric repeat unit, 5'-TTAGGG-3'. The catalytic cycle involves primer binding, primer extension and release of product once the template boundary has been reached or nascent product translocation followed by further extension. More active on substrates containing 2 or 3 telomeric repeats. Telomerase activity is regulated by a number of factors including telomerase complex-associated proteins, chaperones and polypeptide modifiers. Modulates Wnt signaling. Plays important roles in aging and antiapoptosis. In Bos taurus (Bovine), this protein is Telomerase reverse transcriptase (TERT).